Reading from the N-terminus, the 234-residue chain is Ubiquinone biosynthesis O-methyltransferase (234 aa).

The S-adenosyl-L-methionine site is built by Arg-37, Gly-56, Asp-77, and Met-121.

It belongs to the methyltransferase superfamily. UbiG/COQ3 family.

It carries out the reaction a 3-demethylubiquinol + S-adenosyl-L-methionine = a ubiquinol + S-adenosyl-L-homocysteine + H(+). It catalyses the reaction a 3-(all-trans-polyprenyl)benzene-1,2-diol + S-adenosyl-L-methionine = a 2-methoxy-6-(all-trans-polyprenyl)phenol + S-adenosyl-L-homocysteine + H(+). It functions in the pathway cofactor biosynthesis; ubiquinone biosynthesis. O-methyltransferase that catalyzes the 2 O-methylation steps in the ubiquinone biosynthetic pathway. In Aromatoleum aromaticum (strain DSM 19018 / LMG 30748 / EbN1) (Azoarcus sp. (strain EbN1)), this protein is Ubiquinone biosynthesis O-methyltransferase.